An 86-amino-acid polypeptide reads, in one-letter code: Kappa-theraphotoxin-Cg1a 4 (86 aa).

The signal sequence occupies residues 1-21 (MKASVLITLAVLGVMFVWASA). Positions 22 to 50 (AELEERGSDQRDSPAWLKSMERIFQSEER) are excised as a propeptide. 3 cysteine pairs are disulfide-bonded: Cys52-Cys66, Cys59-Cys71, and Cys65-Cys78. A Phenylalanine amide modification is found at Phe84.

Belongs to the neurotoxin 10 (Hwtx-1) family. 28 (Jztx-11) subfamily. In terms of tissue distribution, expressed by the venom gland.

Its subcellular location is the secreted. Its function is as follows. This toxin acts as a voltage-dependent gating-modifier. It inhibits the sodium conductance (IC(50)=124 nM) and slows the fast inactivation (EC(50)=1180 nM) of Nav1.5/SCN5A. It significantly shifts the activation to more depolarized voltages and decreases the deactivation of Nav1.5 currents upon extreme depolarization, but only slightly affects voltage-dependence of steady-state inactivation. In addition, this toxin causes an approximately five-fold decrease in the rate of recovery from inactivation and an approximately 1.9-fold reduction in the closed-state inactivation rate. This toxin integrates the functions of site 3 toxins (alpha-scorpion toxins) with site 4 toxins (beta-scorpion and spider toxins) by targeting multiple sites on Nav1.5. Also shows inhibition of voltage-gated potassium channels (5 uM completely inhibits Kv2.1/KCNB1, whereas 5 uM moderately inhibits Kv4.2/KCND2 Kv4.1/KCND1 channels). In Chilobrachys guangxiensis (Chinese earth tiger tarantula), this protein is Kappa-theraphotoxin-Cg1a 4.